A 384-amino-acid chain; its full sequence is Cobalt-precorrin-5B C(1)-methyltransferase (384 aa).

It belongs to the CbiD family.

It catalyses the reaction Co-precorrin-5B + S-adenosyl-L-methionine = Co-precorrin-6A + S-adenosyl-L-homocysteine. It functions in the pathway cofactor biosynthesis; adenosylcobalamin biosynthesis; cob(II)yrinate a,c-diamide from sirohydrochlorin (anaerobic route): step 6/10. Catalyzes the methylation of C-1 in cobalt-precorrin-5B to form cobalt-precorrin-6A. This Marinomonas sp. (strain MWYL1) protein is Cobalt-precorrin-5B C(1)-methyltransferase.